The following is a 225-amino-acid chain: Uridylate kinase (225 aa).

Glycine 9–serine 10 serves as a coordination point for ATP. Glycine 46 lines the UMP pocket. ATP contacts are provided by glycine 47 and arginine 51. Residues aspartate 67 and threonine 115–threonine 121 each bind UMP. ATP is bound by residues threonine 141, asparagine 142, tyrosine 147, and aspartate 150.

This sequence belongs to the UMP kinase family. As to quaternary structure, homohexamer.

Its subcellular location is the cytoplasm. It carries out the reaction UMP + ATP = UDP + ADP. The protein operates within pyrimidine metabolism; CTP biosynthesis via de novo pathway; UDP from UMP (UMPK route): step 1/1. Its activity is regulated as follows. Inhibited by UTP. Its function is as follows. Catalyzes the reversible phosphorylation of UMP to UDP. This is Uridylate kinase from Methanococcus maripaludis (strain C6 / ATCC BAA-1332).